The following is a 406-amino-acid chain: Tryptophan synthase beta chain (406 aa).

An N6-(pyridoxal phosphate)lysine modification is found at lysine 99.

Belongs to the TrpB family. As to quaternary structure, tetramer of two alpha and two beta chains. Pyridoxal 5'-phosphate serves as cofactor.

It catalyses the reaction (1S,2R)-1-C-(indol-3-yl)glycerol 3-phosphate + L-serine = D-glyceraldehyde 3-phosphate + L-tryptophan + H2O. It participates in amino-acid biosynthesis; L-tryptophan biosynthesis; L-tryptophan from chorismate: step 5/5. In terms of biological role, the beta subunit is responsible for the synthesis of L-tryptophan from indole and L-serine. This chain is Tryptophan synthase beta chain, found in Methylobacterium sp. (strain 4-46).